Reading from the N-terminus, the 326-residue chain is Type II secretion system protein K (326 aa).

Positions 1–7 are cleaved as a propeptide — leader sequence; the sequence is MNHRQRG. The helical transmembrane segment at 8–28 threads the bilayer; sequence IALLMVLLILALMMVLASAMT. The Periplasmic segment spans residues 29–326; that stretch reads ERSARMYQQT…RYGIYWVADE (298 aa).

The protein belongs to the GSP K family. Type II secretion is composed of four main components: the outer membrane complex, the inner membrane complex, the cytoplasmic secretion ATPase and the periplasm-spanning pseudopilus. Interacts with core component PulG. Post-translationally, cleaved by prepilin peptidase.

It localises to the cell inner membrane. Its function is as follows. Component of the type II secretion system required for the energy-dependent secretion of extracellular factors such as proteases and toxins from the periplasm. Plays a role in pseudopilus assembly and seems to control its length. Interacts with the pseudopilus tip complex that is critical for the recognition and binding of secretion substrates. The protein is Type II secretion system protein K (pulK) of Klebsiella pneumoniae.